The sequence spans 522 residues: Protein DETOXIFICATION 31 (522 aa).

Transmembrane regions (helical) follow at residues 89 to 109 (GAVTQVFAGHISTLALAAVSI), 113 to 133 (VIAGFSFGIMLGMGSALETLC), 154 to 174 (VILSVTALFLSLIYIFAAPIL), 183 to 203 (ISAMAGIFSIYMIPQIFAYAI), 217 to 237 (IMVMAGISGVVLVIHSFFTWL), 249 to 269 (LALVLNTSWWVIVVAQLVYIF), 299 to 319 (AAMLCLEIWYFMALVLFAGYL), 324 to 344 (VSVAALSICMNILGWAAMVAF), 371 to 391 (VVAVILSTAIGMFIAAGLLFF), 415 to 435 (MLAFCIVINNVQPVLSGVAVG), 441 to 461 (VVAYVNIACYYLFGVPFGLLL), and 471 to 491 (GIWWGMVTGTFVQSIVLTWMI).

This sequence belongs to the multi antimicrobial extrusion (MATE) (TC 2.A.66.1) family.

It is found in the membrane. Its function is as follows. Positively mediates root hair elongation. The chain is Protein DETOXIFICATION 31 from Arabidopsis thaliana (Mouse-ear cress).